The sequence spans 268 residues: Phosphate import ATP-binding protein PstB (268 aa).

Positions 22–263 (LAVRNLNFYY…PKQQQTQDYI (242 aa)) constitute an ABC transporter domain. Residue 54 to 61 (GPSGCGKS) coordinates ATP.

Belongs to the ABC transporter superfamily. Phosphate importer (TC 3.A.1.7) family. As to quaternary structure, the complex is composed of two ATP-binding proteins (PstB), two transmembrane proteins (PstC and PstA) and a solute-binding protein (PstS).

It localises to the cell inner membrane. It carries out the reaction phosphate(out) + ATP + H2O = ADP + 2 phosphate(in) + H(+). Part of the ABC transporter complex PstSACB involved in phosphate import. Responsible for energy coupling to the transport system. The polypeptide is Phosphate import ATP-binding protein PstB (Gluconobacter oxydans (strain 621H) (Gluconobacter suboxydans)).